The following is a 479-amino-acid chain: NADH-quinone oxidoreductase subunit N 2 (479 aa).

14 consecutive transmembrane segments (helical) span residues Phe4–Thr24, Gly43–Tyr63, Ala67–Ser87, Pro99–Ile119, Val121–Met141, Ile159–Leu179, Ala201–Phe221, Leu239–Ala259, Ala267–Val287, Leu294–Asp314, Phe318–Val338, Leu364–Phe384, Ala401–Val421, and Ala444–Ile464.

The protein belongs to the complex I subunit 2 family. NDH-1 is composed of 14 different subunits. Subunits NuoA, H, J, K, L, M, N constitute the membrane sector of the complex.

The protein resides in the cell inner membrane. It carries out the reaction a quinone + NADH + 5 H(+)(in) = a quinol + NAD(+) + 4 H(+)(out). NDH-1 shuttles electrons from NADH, via FMN and iron-sulfur (Fe-S) centers, to quinones in the respiratory chain. The immediate electron acceptor for the enzyme in this species is believed to be ubiquinone. Couples the redox reaction to proton translocation (for every two electrons transferred, four hydrogen ions are translocated across the cytoplasmic membrane), and thus conserves the redox energy in a proton gradient. In Opitutus terrae (strain DSM 11246 / JCM 15787 / PB90-1), this protein is NADH-quinone oxidoreductase subunit N 2.